A 235-amino-acid polypeptide reads, in one-letter code: Ribosomal RNA small subunit methyltransferase G (235 aa).

Residues Gly-75, Phe-80, 126-127 (AE), and Arg-145 contribute to the S-adenosyl-L-methionine site.

Belongs to the methyltransferase superfamily. RNA methyltransferase RsmG family.

It localises to the cytoplasm. Specifically methylates the N7 position of a guanine in 16S rRNA. The polypeptide is Ribosomal RNA small subunit methyltransferase G (Carboxydothermus hydrogenoformans (strain ATCC BAA-161 / DSM 6008 / Z-2901)).